The primary structure comprises 78 residues: Large ribosomal subunit protein bL28 (78 aa).

Residues Met1 to Trp29 form a disordered region.

The protein belongs to the bacterial ribosomal protein bL28 family.

The chain is Large ribosomal subunit protein bL28 from Corynebacterium efficiens (strain DSM 44549 / YS-314 / AJ 12310 / JCM 11189 / NBRC 100395).